Here is a 553-residue protein sequence, read N- to C-terminus: MMPTPVILLKEGTDTSQGIPQLVSNINACQVIAEAVRTTLGPRGMDKLIVDDRGKATISNDGATILKLLDVVHPAAKTLVDIAKSQDAEVGDGTTSVTLLAAEFLKQVKPYVEEGLHPQIIIRAFRTATQLAVNKIKDIAVSVKKEDKDEQRSLLEKCAATALSSKLISQSKEFFSKMVVDAVMMLDDLLQLKMIGIKKVQGGALEDSQLVAGVAFKKTFSYAGFEMQPKKYQSPKIALLNVELELKAEKDNAEVRVNTVEDYQAIVDAEWNILYDKLDKIHKSGAKVVLSKLPIGDVATQYFADRDMFCAGRVPEEDLKRTMMACGGSIQTSVNALSDDVLGRCELFEEIQIGGDRYNFFTGCPKAKTCTIILRGGAEQFMEETERSLHDAIMIVRRAIKNDSVVAGGGAIEMELSKYLRDYSRTIPGKQQLLIGAYAKALEIIPRQLCDNAGFDATNILNKLRAKHAQGGMWYGVDVNNEDIADNFEACVWEPAIVRINALTAASEAACLIVSVDETIKNPRSTVDAPPGGRGRGRGQTPQPLRPRSVALS.

Gly-41 serves as a coordination point for ADP. Gly-41 contributes to the ATP binding site. Asp-92 serves as a coordination point for Mg(2+). ADP-binding residues include Gly-93, Thr-94, Thr-95, Ser-96, Ser-164, and Ser-165. An ATP-binding site is contributed by Gly-93. Residue Ser-96 participates in ATP binding. The ATP site is built by Arg-398 and Gly-409. Positions 409, 494, and 499 each coordinate ADP. Arg-499 is an ATP binding site. A disordered region spans residues 523-553; that stretch reads PRSTVDAPPGGRGRGRGQTPQPLRPRSVALS. Low complexity predominate over residues 539-553; it reads GQTPQPLRPRSVALS.

Component of the chaperonin-containing T-complex (TRiC), a hexadecamer composed of two identical back-to-back stacked rings enclosing a protein folding chamber. Each ring is made up of eight different subunits: TCP1/CCT1, CCT2, CCT3, CCT4, CCT5, CCT6A/CCT6, CCT7, CCT8.

The protein localises to the cytoplasm. It carries out the reaction ATP + H2O = ADP + phosphate + H(+). Its function is as follows. Component of the chaperonin-containing T-complex (TRiC), a molecular chaperone complex that assists the folding of actin, tubulin and other proteins upon ATP hydrolysis. This is T-complex protein 1 subunit eta from Gallus gallus (Chicken).